The primary structure comprises 105 residues: Pyrimidine/purine nucleoside phosphorylase (105 aa).

The protein belongs to the nucleoside phosphorylase PpnP family.

It carries out the reaction a purine D-ribonucleoside + phosphate = a purine nucleobase + alpha-D-ribose 1-phosphate. The enzyme catalyses adenosine + phosphate = alpha-D-ribose 1-phosphate + adenine. The catalysed reaction is cytidine + phosphate = cytosine + alpha-D-ribose 1-phosphate. It catalyses the reaction guanosine + phosphate = alpha-D-ribose 1-phosphate + guanine. It carries out the reaction inosine + phosphate = alpha-D-ribose 1-phosphate + hypoxanthine. The enzyme catalyses thymidine + phosphate = 2-deoxy-alpha-D-ribose 1-phosphate + thymine. The catalysed reaction is uridine + phosphate = alpha-D-ribose 1-phosphate + uracil. It catalyses the reaction xanthosine + phosphate = alpha-D-ribose 1-phosphate + xanthine. In terms of biological role, catalyzes the phosphorolysis of diverse nucleosides, yielding D-ribose 1-phosphate and the respective free bases. Can use uridine, adenosine, guanosine, cytidine, thymidine, inosine and xanthosine as substrates. Also catalyzes the reverse reactions. The protein is Pyrimidine/purine nucleoside phosphorylase of Acidovorax ebreus (strain TPSY) (Diaphorobacter sp. (strain TPSY)).